The primary structure comprises 432 residues: D-amino acid dehydrogenase (432 aa).

3–17 (VVILGSGVVGVASAW) provides a ligand contact to FAD.

This sequence belongs to the DadA oxidoreductase family. It depends on FAD as a cofactor.

The catalysed reaction is a D-alpha-amino acid + A + H2O = a 2-oxocarboxylate + AH2 + NH4(+). The protein operates within amino-acid degradation; D-alanine degradation; NH(3) and pyruvate from D-alanine: step 1/1. Oxidative deamination of D-amino acids. This is D-amino acid dehydrogenase from Escherichia coli O45:K1 (strain S88 / ExPEC).